The chain runs to 315 residues: tRNA dimethylallyltransferase (315 aa).

Gly-14 to Ser-21 lines the ATP pocket. Residue Thr-16 to Ser-21 participates in substrate binding. The interval Asp-39 to Gln-42 is interaction with substrate tRNA.

Belongs to the IPP transferase family. Monomer. Requires Mg(2+) as cofactor.

The catalysed reaction is adenosine(37) in tRNA + dimethylallyl diphosphate = N(6)-dimethylallyladenosine(37) in tRNA + diphosphate. In terms of biological role, catalyzes the transfer of a dimethylallyl group onto the adenine at position 37 in tRNAs that read codons beginning with uridine, leading to the formation of N6-(dimethylallyl)adenosine (i(6)A). The protein is tRNA dimethylallyltransferase of Microcystis aeruginosa (strain NIES-843 / IAM M-2473).